Reading from the N-terminus, the 301-residue chain is Protoheme IX farnesyltransferase (301 aa).

9 helical membrane-spanning segments follow: residues 20 to 42 (FTELVKIGIVNSNTITAFTGMWL), 55 to 75 (VDVIFFTIVGSALIVAASGAF), 105 to 125 (ALMVALVLGVVGTIMLFMTTW), 126 to 146 (QAGVLGVIGVFLYVVVYSLYA), 150 to 172 (LVSNTVIGSFSGAVPPLIGWFAV), 176 to 198 (FSIVPIMLFLVMFCWQPPHFYAI), 227 to 247 (MFFWVILLTILPFFMFDLGIV), 249 to 269 (VILATLLNIGWLALSIYGFKM), and 280 to 300 (FVYSLNYMTILFVAMVVISIF).

This sequence belongs to the UbiA prenyltransferase family. Protoheme IX farnesyltransferase subfamily. Interacts with CtaA.

It localises to the cell membrane. The enzyme catalyses heme b + (2E,6E)-farnesyl diphosphate + H2O = Fe(II)-heme o + diphosphate. Its pathway is porphyrin-containing compound metabolism; heme O biosynthesis; heme O from protoheme: step 1/1. Converts heme B (protoheme IX) to heme O by substitution of the vinyl group on carbon 2 of heme B porphyrin ring with a hydroxyethyl farnesyl side group. The polypeptide is Protoheme IX farnesyltransferase (Listeria monocytogenes serovar 1/2a (strain ATCC BAA-679 / EGD-e)).